A 622-amino-acid chain; its full sequence is Dynein axonemal assembly factor 1 (622 aa).

Residues 1 to 80 are disordered; that stretch reads MHPEVSEPQA…ARNDRDDRGP (80 aa). Residues 22 to 42 are compositionally biased toward basic and acidic residues; sequence AGDHGRAGPGVRKEEINETKE. Low complexity predominate over residues 48 to 59; sequence STTSCQSQKQQS. The span at 62–80 shows a compositional bias: basic and acidic residues; the sequence is SRLDCRSGYARNDRDDRGP. 6 LRR repeats span residues 101–123, 124–145, 146–167, 168–189, 190–211, and 215–236; these read ALND…EEYT, GLRC…QAQS, ELRC…EPLQ, KLDA…SCLP, VLNT…QHLR, and RLCV…SVLE. In terms of domain architecture, LRRCT spans 249–288; sequence NPVTKHIPNYRRTVTVRLKQLTYLDDRPVFPKDRACAEAW. Positions 326–336 are enriched in basic and acidic residues; sequence EERKKARDKGE. Residues 326–360 are disordered; that stretch reads EERKKARDKGETPLPDSEESSSTSPEAQDKPPLGE. Residues 337–351 are compositionally biased toward low complexity; it reads TPLPDSEESSSTSPE. 3 positions are modified to phosphoserine: Ser349, Ser464, and Ser487. Disordered stretches follow at residues 481–503 and 540–622; these read SSLS…EHTP and LETQ…FGLD. Residues 540–550 show a composition bias toward polar residues; sequence LETQGQVFSTT.

It belongs to the DNAAF1 family.

The protein resides in the cell projection. It localises to the cilium. Its function is as follows. Cilium-specific protein required for the stability of the ciliary architecture. Plays a role in cytoplasmic preassembly of dynein arms. Involved in regulation of microtubule-based cilia and actin-based brush border microvilli. The chain is Dynein axonemal assembly factor 1 (Dnaaf1) from Peromyscus leucopus (White-footed mouse).